The sequence spans 1091 residues: Exonuclease/helicase subunit RexB (1091 aa).

This sequence belongs to the helicase family. AddB/RexB type 2 subfamily. Heterodimer of RexA (AddA) and RexB. It depends on Mg(2+) as a cofactor.

Involved in DNA double-strand break repair. Is not involved in recombination during natural competence or in plasmid establishment. In terms of biological role, the heterodimer acts as both an ATP-dependent DNA helicase and an ATP-dependent, dual-direction single-stranded exonuclease. Recognizes the chi site generating a DNA molecule suitable for the initiation of homologous recombination. This subunit has 5' -&gt; 3' nuclease activity but not helicase activity. This chain is Exonuclease/helicase subunit RexB, found in Streptococcus pneumoniae serotype 4 (strain ATCC BAA-334 / TIGR4).